The sequence spans 332 residues: L-lactate dehydrogenase A chain (332 aa).

Residues 29–57 (GMVG…MEDK) and arginine 99 contribute to the NAD(+) site. Substrate is bound by residues arginine 106, asparagine 138, and arginine 169. Residue asparagine 138 coordinates NAD(+). Histidine 193 functions as the Proton acceptor in the catalytic mechanism. Residue threonine 248 participates in substrate binding.

It belongs to the LDH/MDH superfamily. LDH family. In terms of assembly, homotetramer.

It localises to the cytoplasm. It carries out the reaction (S)-lactate + NAD(+) = pyruvate + NADH + H(+). It participates in fermentation; pyruvate fermentation to lactate; (S)-lactate from pyruvate: step 1/1. Interconverts simultaneously and stereospecifically pyruvate and lactate with concomitant interconversion of NADH and NAD(+). This chain is L-lactate dehydrogenase A chain (ldha), found in Sphyraena argentea (Pacific barracuda).